Reading from the N-terminus, the 200-residue chain is MAPTSKTSPPRLGKPLKRAFFGRSVREVAHDLIGATMLVDGVGGLIVEVEAYHHTEPAAHSYNGPTPRNHVMFGPPGFAYVYRSYGIHWCVNFVCEAEGSAAAVLIRALEPTHGIAAMRRRRHLQDVHALCSGPGKLTEALGITIAHNALPLDRPPIALHARTEDLEVATGIRIGITKAVELPWRYGVKGSKFLSKPFPK.

The protein belongs to the DNA glycosylase MPG family.

The sequence is that of Putative 3-methyladenine DNA glycosylase from Bradyrhizobium diazoefficiens (strain JCM 10833 / BCRC 13528 / IAM 13628 / NBRC 14792 / USDA 110).